Reading from the N-terminus, the 1097-residue chain is MAAAAAEQQQFYLLLGNLLSPDNVVRKQAEETYENIPGQSKITFLLQAIRNTTAAEEARQMAAVLLRRLLSSAFDEVYPALPSDVQTAIKSELLMIIQMETQSSMRKKVCDIAAELARNLIDEDGNNQWPEGLKFLFDSVSSQNVGLREAALHIFWNFPGIFGNQQQHYLDVIKRMLVQCMQDQEHPSIRTLSARATAAFILANEHNVALFKHFADLLPGFLQAVNDSCYQNDDSVLKSLVEIADTVPKYLRPHLEATLQLSLKLCGDTSLNNMQRQLALEVIVTLSETAAAMLRKHTNIVAQTIPQMLAMMVDLEEDEDWANADELEDDDFDSNAVAGESALDRMACGLGGKLVLPMIKEHIMQMLQNPDWKYRHAGLMALSAIGEGCHQQMEGILNEIVNFVLLFLQDPHPRVRYAACNAVGQMATDFAPGFQKKFHEKVIAALLQTMEDQGNQRVQAHAAAALINFTEDCPKSLLIPYLDNLVKHLHSIMVLKLQELIQKGTKLVLEQVVTSIASVADTAEEKFVPYYDLFMPSLKHIVENAVQKELRLLRGKTIECISLIGLAVGKEKFMQDASDVMQLLLKTQTDFNDMEDDDPQISYMISAWARMCKILGKEFQQYLPVVMGPLMKTASIKPEVALLDTQDMENMSDDDGWEFVNLGDQQSFGIKTAGLEEKSTACQMLVCYAKELKEGFVEYTEQVVKLMVPLLKFYFHDGVRVAAAESMPLLLECARVRGPEYLTQMWHFMCDALIKAIGTEPDSDVLSEIMHSFAKCIEVMGDGCLNNEHFEELGGILKAKLEEHFKNQELRQVKRQDEDYDEQVEESLQDEDDNDVYILTKVSDILHSIFSSYKEKVLPWFEQLLPLIVNLICPHRPWPDRQWGLCIFDDVIEHCSPASFKYAEYFLRPMLQYVCDNSPEVRQAAAYGLGVMAQYGGDNYRPFCTEALPLLVRVIQSADSKTKENVNATENCISAVGKIMKFKPDCVNVEEVLPHWLSWLPLHEDKEEAVQTFNYLCDLIESNHPIVLGPNNTNLPKIFSIIAEGEMHEAIKHEDPCAKRLANVVRQVQTSGGLWTECIAQLSPEQQAAIQELLNSA.

An N-acetylalanine modification is found at A2. 24 HEAT repeats span residues 5–38, 43–77, 95–122, 130–157, 167–201, 210–246, 254–289, 298–350, 352–386, 390–430, 432–472, 475–523, 525–568, 570–615, 617–692, 695–737, 741–780, 787–853, 856–895, 903–935, 943–983, 990–1021, 1032–1067, and 1070–1093; these read AAEQ…NIPG, TFLL…FDEV, MIIQ…NLID, PEGL…IFWN, QHYL…AAFI, LFKH…IADT, HLEA…LSET, TNIV…ACGL, GKLV…SAIG, HQQM…ATDF, PGFQ…FTED, KSLL…ADTA, EKFV…GLAV, KEKF…CKIL, KEFQ…AKEL, GFVE…ARVR, YLTQ…IEVM, NEHF…FSSY, KVLP…IEHC, AEYF…MAQY, FCTE…MKFK, EEVL…DLIE, NTNL…VVRQ, and TSGG…IQEL. The Importin N-terminal domain maps to 28–99; sequence QAEETYENIP…KSELLMIIQM (72 aa). The ran-GTP binding stretch occupies residues 325-375; the sequence is DELEDDDFDSNAVAGESALDRMACGLGGKLVLPMIKEHIMQMLQNPDWKYR. A Phosphoserine modification is found at S827.

It belongs to the importin beta family. Importin beta-3 subfamily. As to quaternary structure, interacts with RPS7 and RPL5. Interacts with RPL23A (via BIB domain). Interacts with H2A, H2B, H3 and H4 histones. Interacts with CPEB3; this mediates CPEB3 nuclear import following neuronal stimulation which enhances the interaction in a RAN-regulated manner. Interacts with AIFM2; this interaction likely mediates the translocation of AIFM2 into the nucleus upon oxidative stress. Interacts with STX3 (isoform 3). Interacts with SRP19. (Microbial infection) Interacts with HIV-1 Rev.

Its subcellular location is the cytoplasm. It is found in the nucleus. It localises to the nucleolus. Functionally, functions in nuclear protein import as nuclear transport receptor. Serves as receptor for nuclear localization signals (NLS) in cargo substrates. Is thought to mediate docking of the importin/substrate complex to the nuclear pore complex (NPC) through binding to nucleoporin and the complex is subsequently translocated through the pore by an energy requiring, Ran-dependent mechanism. At the nucleoplasmic side of the NPC, Ran binds to the importin, the importin/substrate complex dissociates and importin is re-exported from the nucleus to the cytoplasm where GTP hydrolysis releases Ran. The directionality of nuclear import is thought to be conferred by an asymmetric distribution of the GTP- and GDP-bound forms of Ran between the cytoplasm and nucleus. Mediates the nuclear import of ribosomal proteins RPL23A, RPS7 and RPL5. In vitro, mediates nuclear import of H2A, H2B, H3 and H4 histones. Binds to CPEB3 and mediates its nuclear import following neuronal stimulation. In case of HIV-1 infection, binds and mediates the nuclear import of HIV-1 Rev. In Homo sapiens (Human), this protein is Importin-5 (IPO5).